The primary structure comprises 746 residues: Bud site selection protein 7 (746 aa).

The tract at residues 733-746 is CHS5-binding; it reads LNFFTTCTIGCYDA.

This sequence belongs to the CHAPS family. As to quaternary structure, component of the CHS5/6 complex composed of the 4 CHAPS proteins BCH1, BCH2v, BUD7, and CHS6 as well as at least CHS5 and GTP-bound ARF1. The complex interacts with the cargo protein CHS3.

Its subcellular location is the golgi apparatus. The protein resides in the trans-Golgi network membrane. Its function is as follows. Member of the CHS5-ARF1P-binding proteins (CHAPS) which mediates export of specific cargo proteins, including chitin synthase CHS3. May be involved in positioning the proximal bud pole signal. The chain is Bud site selection protein 7 (BUD7) from Saccharomyces cerevisiae (strain ATCC 204508 / S288c) (Baker's yeast).